Reading from the N-terminus, the 591-residue chain is Aspartate--tRNA ligase (591 aa).

Residue glutamate 176 participates in L-aspartate binding. The tract at residues 200–203 is aspartate; sequence QILK. Arginine 222 contributes to the L-aspartate binding site. ATP contacts are provided by residues 222 to 224 and glutamine 231; that span reads RDE. Residue histidine 450 coordinates L-aspartate. Glutamate 484 lines the ATP pocket. Arginine 491 lines the L-aspartate pocket. An ATP-binding site is contributed by 536 to 539; the sequence is GLDR.

It belongs to the class-II aminoacyl-tRNA synthetase family. Type 1 subfamily. As to quaternary structure, homodimer.

The protein resides in the cytoplasm. It carries out the reaction tRNA(Asp) + L-aspartate + ATP = L-aspartyl-tRNA(Asp) + AMP + diphosphate. Its function is as follows. Catalyzes the attachment of L-aspartate to tRNA(Asp) in a two-step reaction: L-aspartate is first activated by ATP to form Asp-AMP and then transferred to the acceptor end of tRNA(Asp). In Listeria monocytogenes serotype 4a (strain HCC23), this protein is Aspartate--tRNA ligase.